A 181-amino-acid polypeptide reads, in one-letter code: Trans-acting factor D (181 aa).

Functionally, plays a role in 2-micron plasmid partitioning. Antagonizes transcriptional repression of recombinase FLP by REP1-REP2. Regulates both stability and copy number of the plasmid by blocking the formation of the REP1-REP2 repressor complex. The polypeptide is Trans-acting factor D (Saccharomyces cerevisiae (strain ATCC 204508 / S288c) (Baker's yeast)).